Consider the following 192-residue polypeptide: UPF0312 protein PputGB1_5030 (192 aa).

Positions 1–23 are cleaved as a signal peptide; sequence MLKKTFAALALGTALLSAGQAMA.

It belongs to the UPF0312 family. Type 1 subfamily.

It is found in the periplasm. This is UPF0312 protein PputGB1_5030 from Pseudomonas putida (strain GB-1).